The following is a 201-amino-acid chain: Probable quinol oxidase subunit 3 (201 aa).

Transmembrane regions (helical) follow at residues L20–L40, L62–Y82, L91–I111, F133–C153, and F172–V192.

This sequence belongs to the cytochrome c oxidase subunit 3 family.

It localises to the cell membrane. It carries out the reaction 2 a quinol + O2 = 2 a quinone + 2 H2O. Its function is as follows. Catalyzes quinol oxidation with the concomitant reduction of oxygen to water. The protein is Probable quinol oxidase subunit 3 (qoxC) of Staphylococcus haemolyticus (strain JCSC1435).